A 365-amino-acid chain; its full sequence is Putative glycosyltransferase C06E1.7 (365 aa).

This sequence belongs to the glycosyltransferase 11 family.

The chain is Putative glycosyltransferase C06E1.7 from Caenorhabditis elegans.